Consider the following 350-residue polypeptide: Nuclear pore complex-interacting protein family member A3 (350 aa).

Positions 306–325 (KTPPECLLTPLPPSAPPSVD) are disordered.

It belongs to the NPIP family.

This Homo sapiens (Human) protein is Nuclear pore complex-interacting protein family member A3 (NPIPA3).